The chain runs to 523 residues: MSLERSTSPNPTERTSLLSDTASTISSRDDVEQSSLKQRRTPIPTGQLGGKVSMHSIIINAEGHLWPYINQFVNDIGVSDGNPRNVGFYSGLIESVFACGEVCSIFMLSRLSDRIGRRPVLLPSALGIAVFTALFGLSSSFTMMLTLRVCAGLLAGATPIVHSIVSELTDDTNNALVVPLYGLITPIGFAIGPLIGGTLEHAATKYPNVFGYELFRKYPYFLPSFVPCCMAIVGVTFGYFFLKETLPSLVKSKKRLERQRSSSSISSENSTLYGATEHIRDSTEETAADEEPDSKPKGITELIRDPSIRAIMASGTFLMFLYTSSDVIFSLYCFTAVEDGGVGLPPEKIGYAFSVAGLIAMLMQLCITPWVLRTFDKAKVYHFCMCSFPLVFALMGCLNPLAQTGYSEINKTLHPTTTGLLYAAIAILLLLARVCVMAFPISMMLVKQTADKHSLATANGLVQVAMTLARAFCPTISSSVFAYSTSHNILGGHFWVVVMVFISLVGVWQSTKIARVTKTKEQL.

The segment covering 1 to 26 (MSLERSTSPNPTERTSLLSDTASTIS) has biased composition (polar residues). The tract at residues 1 to 45 (MSLERSTSPNPTERTSLLSDTASTISSRDDVEQSSLKQRRTPIPT) is disordered. Helical transmembrane passes span 88-108 (FYSG…IFML), 125-145 (ALGI…TMML), 149-169 (VCAG…SELT), 175-195 (ALVV…GPLI), and 221-241 (FLPS…GYFF). Residue asparagine 269 is glycosylated (N-linked (GlcNAc...) asparagine). The next 3 helical transmembrane spans lie at 317-337 (FLMF…FTAV), 352-372 (AFSV…PWVL), and 382-402 (HFCM…NPLA). Asparagine 410 carries an N-linked (GlcNAc...) asparagine glycan. 3 helical membrane-spanning segments follow: residues 419–439 (GLLY…VMAF), 455–474 (LATA…AFCP), and 488–508 (NILG…VGVW).

Belongs to the major facilitator superfamily. TCR/Tet family.

It is found in the membrane. Its function is as follows. Major facilitator-type transporter; part of the gene cluster that mediates the biosynthesis of psilocybin, a psychotropic tryptamine-derived natural product. The sequence is that of Major facilitator-type transporter psiT2 from Psilocybe cubensis (Psychedelic mushroom).